A 62-amino-acid chain; its full sequence is UPF0370 protein plu2724 (62 aa).

The helical transmembrane segment at 3–23 (WLADYWWIILILLVGVLLNAI) threads the bilayer. A disordered region spans residues 36-62 (DNKPELPPHRDLNSKWDDEDDWPQKKP).

This sequence belongs to the UPF0370 family.

The protein localises to the cell membrane. This chain is UPF0370 protein plu2724, found in Photorhabdus laumondii subsp. laumondii (strain DSM 15139 / CIP 105565 / TT01) (Photorhabdus luminescens subsp. laumondii).